A 203-amino-acid chain; its full sequence is Small ribosomal subunit protein uS4 (203 aa).

The 64-residue stretch at 93–156 (RRLDNVVYRL…LKVPAILEAV (64 aa)) folds into the S4 RNA-binding domain.

The protein belongs to the universal ribosomal protein uS4 family. In terms of assembly, part of the 30S ribosomal subunit. Contacts protein S5. The interaction surface between S4 and S5 is involved in control of translational fidelity.

Its function is as follows. One of the primary rRNA binding proteins, it binds directly to 16S rRNA where it nucleates assembly of the body of the 30S subunit. With S5 and S12 plays an important role in translational accuracy. The sequence is that of Small ribosomal subunit protein uS4 from Streptococcus sanguinis (strain SK36).